Here is a 554-residue protein sequence, read N- to C-terminus: Propanediol dehydratase large subunit (554 aa).

Belongs to the diol/glycerol dehydratase large subunit family. As to quaternary structure, the propanediol dehydratase enzyme is a heterotrimeric complex composed of a large (PduC), a medium (PduD) and a small (PduE) subunit. It depends on adenosylcob(III)alamin as a cofactor.

It is found in the bacterial microcompartment. The catalysed reaction is propane-1,2-diol = propanal + H2O. It participates in polyol metabolism; 1,2-propanediol degradation. Part of the PduCDE complex that catalyzes the dehydration of 1,2-propanediol (1,2-PD) to propionaldehyde. This subunit is directly targeted to the bacterial microcompartment (BMC). Functionally, expression of a cosmid containing the full 21-gene pdu operon in E.coli allows E.coli to grow on 1,2-propanediol (1,2-PD) with the appearance of BMCs in its cytoplasm. In terms of biological role, the 1,2-PD-specific bacterial microcompartment (BMC) concentrates low levels of 1,2-PD catabolic enzymes, concentrates volatile reaction intermediates thus enhancing pathway flux and keeps the level of toxic, mutagenic propionaldehyde low. This chain is Propanediol dehydratase large subunit, found in Citrobacter freundii.